A 464-amino-acid polypeptide reads, in one-letter code: Cystathionine beta-lyase, chloroplastic (464 aa).

The transit peptide at 1–55 (MTSSLSLHSSFVPSFADLSDRGLISKNSPTSVSISKVPTWEKKQISNRNSFKLNC) directs the protein to the chloroplast. Residues tyrosine 127, arginine 129, glycine 157, methionine 158, serine 275, and threonine 277 each contribute to the pyridoxal 5'-phosphate site. An N6-(pyridoxal phosphate)lysine modification is found at lysine 278.

It belongs to the trans-sulfuration enzymes family. In terms of assembly, forms homodimers. May form homotetramers from two homodimers. Pyridoxal 5'-phosphate is required as a cofactor.

It is found in the plastid. Its subcellular location is the chloroplast. It catalyses the reaction L,L-cystathionine + H2O = L-homocysteine + pyruvate + NH4(+). It carries out the reaction an S-substituted L-cysteine + H2O = a thiol + pyruvate + NH4(+). The protein operates within amino-acid biosynthesis; L-methionine biosynthesis via de novo pathway; L-homocysteine from L-cystathionine: step 1/1. Its function is as follows. Catalyzes the penultimate step in the de novo biosynthesis of methionine. Its role in methionine metabolism may affect plant development in different organs, probably by modifying plant auxin transport. Its cysteine desulfhydrase activity may be involved in hydrogen sulfur production using L-cysteine as a substrate. This chain is Cystathionine beta-lyase, chloroplastic, found in Arabidopsis thaliana (Mouse-ear cress).